Consider the following 299-residue polypeptide: Acetylglutamate kinase (299 aa).

Substrate is bound by residues Gly72–Gly73, Arg94, and Asn196.

It belongs to the acetylglutamate kinase family. ArgB subfamily.

It is found in the cytoplasm. The catalysed reaction is N-acetyl-L-glutamate + ATP = N-acetyl-L-glutamyl 5-phosphate + ADP. It functions in the pathway amino-acid biosynthesis; L-arginine biosynthesis; N(2)-acetyl-L-ornithine from L-glutamate: step 2/4. Its function is as follows. Catalyzes the ATP-dependent phosphorylation of N-acetyl-L-glutamate. This Burkholderia thailandensis (strain ATCC 700388 / DSM 13276 / CCUG 48851 / CIP 106301 / E264) protein is Acetylglutamate kinase.